The sequence spans 442 residues: Trigger factor (442 aa).

A PPIase FKBP-type domain is found at 165–250 (DDRVIIDFEG…LQKVMAPELP (86 aa)).

It belongs to the FKBP-type PPIase family. Tig subfamily.

Its subcellular location is the cytoplasm. It carries out the reaction [protein]-peptidylproline (omega=180) = [protein]-peptidylproline (omega=0). Functionally, involved in protein export. Acts as a chaperone by maintaining the newly synthesized protein in an open conformation. Functions as a peptidyl-prolyl cis-trans isomerase. This chain is Trigger factor, found in Coxiella burnetii (strain RSA 493 / Nine Mile phase I).